Here is a 229-residue protein sequence, read N- to C-terminus: Nisin biosynthesis regulatory protein NisR (229 aa).

The region spanning 4–117 is the Response regulatory domain; that stretch reads KILIVDDDQE…QLVAKVEANI (114 aa). Position 53 is a 4-aspartylphosphate (D53). A DNA-binding region (ompR/PhoB-type) is located at residues 132–229; that stretch reads EIRRDLGPIT…VRGLGYQWHG (98 aa).

Post-translationally, phosphorylated by NisK.

Member of the two-component regulatory system NisK/NisR involved in the regulation of the biosynthesis of lantibiotic nisin. NisR may function as a regulatory protein. In Lactococcus lactis subsp. lactis (Streptococcus lactis), this protein is Nisin biosynthesis regulatory protein NisR (nisR).